A 176-amino-acid chain; its full sequence is MVAIKNLFLLAATAVSVLAAPSPLDARATWTCINQQLNPKTNKWEDKRLLYSQAKAESNSHHAPLSDGKTGSSYPHWFTNGYDGNGKLIKGRTPIKFGKADCDRPPKHSQNGMGKDDHYLLEFPTFPDGHDYKFDSKKPKEDPGPARVIYTYPNKVFCGIVAHQRGNQGDLRLCSH.

A signal peptide spans 1–27 (MVAIKNLFLLAATAVSVLAAPSPLDAR). 2 disulfides stabilise this stretch: Cys-32–Cys-174 and Cys-102–Cys-158. Residue His-76 is part of the active site. Residue Glu-122 is the Proton acceptor of the active site. Residue His-163 is the Proton donor of the active site.

It belongs to the ribonuclease U2 family.

It localises to the secreted. Functionally, this purine-specific ribonuclease cleaves 28S RNA in eukaryotic ribosomes, inhibits protein synthesis, and shows antitumor activity. The polypeptide is Ribonuclease mitogillin (mitF) (Aspergillus fumigatus (strain ATCC MYA-4609 / CBS 101355 / FGSC A1100 / Af293) (Neosartorya fumigata)).